Here is a 148-residue protein sequence, read N- to C-terminus: F-box protein At3g55900 (148 aa).

An F-box domain is found at 9–59 (CRNLSELPQELLYKILGLLPTRNVVSTSLISHQRRSQFHWMERLKFRYPRL).

The chain is F-box protein At3g55900 from Arabidopsis thaliana (Mouse-ear cress).